The following is a 311-amino-acid chain: tRNA-cytidine(32) 2-sulfurtransferase (311 aa).

Positions 47–52 match the PP-loop motif motif; that stretch reads SGGKDS. [4Fe-4S] cluster contacts are provided by Cys-122, Cys-125, and Cys-213.

This sequence belongs to the TtcA family. As to quaternary structure, homodimer. Mg(2+) is required as a cofactor. The cofactor is [4Fe-4S] cluster.

The protein localises to the cytoplasm. It carries out the reaction cytidine(32) in tRNA + S-sulfanyl-L-cysteinyl-[cysteine desulfurase] + AH2 + ATP = 2-thiocytidine(32) in tRNA + L-cysteinyl-[cysteine desulfurase] + A + AMP + diphosphate + H(+). It functions in the pathway tRNA modification. In terms of biological role, catalyzes the ATP-dependent 2-thiolation of cytidine in position 32 of tRNA, to form 2-thiocytidine (s(2)C32). The sulfur atoms are provided by the cysteine/cysteine desulfurase (IscS) system. The sequence is that of tRNA-cytidine(32) 2-sulfurtransferase from Pectobacterium atrosepticum (strain SCRI 1043 / ATCC BAA-672) (Erwinia carotovora subsp. atroseptica).